Reading from the N-terminus, the 1050-residue chain is Zinc finger and BTB domain-containing protein 11 (1050 aa).

The segment covering 143–156 (LDSGEESNESEDDL) has biased composition (acidic residues). The segment at 143 to 173 (LDSGEESNESEDDLSNFTSPPSTASKSSKKK) is disordered. The segment covering 157–168 (SNFTSPPSTASK) has biased composition (low complexity). Residues 214–282 (CDVTLLIEGE…AYTSVLSFDF (69 aa)) enclose the BTB domain. 2 disordered regions span residues 373–514 (AEQN…EGGY) and 543–563 (LVQR…STEE). Residues 378 to 399 (EPEQQPAPQASPEAEASVSPVE) are compositionally biased toward low complexity. Composition is skewed to basic and acidic residues over residues 478–501 (SKDE…DTYR) and 553–563 (PKRDAKESTEE). C2H2-type zinc fingers lie at residues 566 to 588 (HKCG…TLKH) and 594 to 616 (YKCP…LIRH). Positions 617 to 641 (TRKEAPTSSSSNSTSTEASGGSSEK) are disordered. Low complexity predominate over residues 623–638 (TSSSSNSTSTEASGGS). 10 consecutive C2H2-type zinc fingers follow at residues 648-670 (FICS…MLKH), 676-698 (HACQ…QSLH), 704-726 (FQCE…MSIH), 732-754 (YFCS…LKKH), 763-785 (YHCT…MNKH), 791-813 (FQCQ…VKSH), 819-843 (YRCN…KATH), 855-877 (RVCD…MNNH), 883-905 (FECL…VRTH), and 911-934 (YVCP…TKFH).

Its subcellular location is the nucleus. The protein localises to the nucleolus. May be involved in transcriptional regulation. This is Zinc finger and BTB domain-containing protein 11 from Mus musculus (Mouse).